Reading from the N-terminus, the 79-residue chain is U1-plectoxin-Pt1c (79 aa).

The first 18 residues, 1-18, serve as a signal peptide directing secretion; sequence HLILASALICALVVCTFA. Positions 19 to 31 are excised as a propeptide; that stretch reads EEQVNVPFLPDER. Cystine bridges form between Cys35–Cys49, Cys42–Cys55, Cys48–Cys66, Cys52–Cys75, and Cys57–Cys64. Positions 78–79 are excised as a propeptide; that stretch reads RR.

Belongs to the neurotoxin 02 (plectoxin) family. 02 (plectoxin) subfamily. Expressed by the venom gland.

The protein localises to the secreted. Potent toxin that may paralyze and/or kill insect pests such as H.virescens (lepidoptera), S.exigua (beet armyworm) and M.sexta (tobacco hornworm). The sequence is that of U1-plectoxin-Pt1c from Plectreurys tristis (Spider).